Reading from the N-terminus, the 187-residue chain is Threonylcarbamoyl-AMP synthase (187 aa).

The region spanning 4–187 is the YrdC-like domain; the sequence is TLTLSEAVTA…DARSGHILRL (184 aa).

The protein belongs to the SUA5 family. TsaC subfamily.

It localises to the cytoplasm. The catalysed reaction is L-threonine + hydrogencarbonate + ATP = L-threonylcarbamoyladenylate + diphosphate + H2O. Functionally, required for the formation of a threonylcarbamoyl group on adenosine at position 37 (t(6)A37) in tRNAs that read codons beginning with adenine. Catalyzes the conversion of L-threonine, HCO(3)(-)/CO(2) and ATP to give threonylcarbamoyl-AMP (TC-AMP) as the acyladenylate intermediate, with the release of diphosphate. This is Threonylcarbamoyl-AMP synthase from Xylella fastidiosa (strain M12).